The primary structure comprises 346 residues: Bifunctional phosphatase IMPL2, chloroplastic (346 aa).

The N-terminal 61 residues, 1-61, are a transit peptide targeting the chloroplast; the sequence is MLAQSHFFSK…VSRRRFCLTM (61 aa). Glu-147, Asp-165, and Asp-168 together coordinate Mg(2+). Residue Glu-147 participates in substrate binding. Substrate is bound by residues 167–170, 263–265, Glu-282, and Asp-289; these read IDGT and GCD. Asp-289 provides a ligand contact to Mg(2+).

The protein belongs to the inositol monophosphatase superfamily. Requires Mg(2+) as cofactor. In terms of tissue distribution, ubiquitous. High expression in roots. Expressed in pistil and seed endosperm.

The protein localises to the plastid. Its subcellular location is the chloroplast. The enzyme catalyses a myo-inositol phosphate + H2O = myo-inositol + phosphate. The catalysed reaction is L-histidinol phosphate + H2O = L-histidinol + phosphate. It catalyses the reaction beta-L-galactose 1-phosphate + H2O = L-galactose + phosphate. Its pathway is amino-acid biosynthesis; L-histidine biosynthesis; L-histidine from 5-phospho-alpha-D-ribose 1-diphosphate: step 8/9. It functions in the pathway polyol metabolism; myo-inositol biosynthesis; myo-inositol from D-glucose 6-phosphate: step 2/2. Phosphatase required for histidine production. Also acts on L-galactose 1-phosphate (L-Gal 1-P), D-myoinositol 3-phosphate (D-Ins 3-P) and D-myoinositol 1-phosphate (D-Ins 1-P). The polypeptide is Bifunctional phosphatase IMPL2, chloroplastic (HISN7) (Arabidopsis thaliana (Mouse-ear cress)).